Reading from the N-terminus, the 179-residue chain is Large ribosomal subunit protein uL5 (179 aa).

This sequence belongs to the universal ribosomal protein uL5 family. In terms of assembly, part of the 50S ribosomal subunit; part of the 5S rRNA/L5/L18/L25 subcomplex. Contacts the 5S rRNA and the P site tRNA. Forms a bridge to the 30S subunit in the 70S ribosome.

In terms of biological role, this is one of the proteins that bind and probably mediate the attachment of the 5S RNA into the large ribosomal subunit, where it forms part of the central protuberance. In the 70S ribosome it contacts protein S13 of the 30S subunit (bridge B1b), connecting the 2 subunits; this bridge is implicated in subunit movement. Contacts the P site tRNA; the 5S rRNA and some of its associated proteins might help stabilize positioning of ribosome-bound tRNAs. In Photobacterium profundum (strain SS9), this protein is Large ribosomal subunit protein uL5.